We begin with the raw amino-acid sequence, 212 residues long: ATP synthase F(0) complex subunit a (212 aa).

6 helical membrane passes run 3–23, 58–78, 87–107, 128–148, 169–189, and 192–212; these read MMGI…IYTS, WAAM…LGLL, QLSM…LTGL, IPLL…ALGV, FVLL…LVLL, and LEIA…TLYL.

This sequence belongs to the ATPase A chain family. Component of the ATP synthase complex composed at least of ATP5F1A/subunit alpha, ATP5F1B/subunit beta, ATP5MC1/subunit c (homooctomer), MT-ATP6/subunit a, MT-ATP8/subunit 8, ATP5ME/subunit e, ATP5MF/subunit f, ATP5MG/subunit g, ATP5MK/subunit k, ATP5MJ/subunit j, ATP5F1C/subunit gamma, ATP5F1D/subunit delta, ATP5F1E/subunit epsilon, ATP5PF/subunit F6, ATP5PB/subunit b, ATP5PD/subunit d, ATP5PO/subunit OSCP. ATP synthase complex consists of a soluble F(1) head domain (subunits alpha(3) and beta(3)) - the catalytic core - and a membrane F(0) domain - the membrane proton channel (subunits c, a, 8, e, f, g, k and j). These two domains are linked by a central stalk (subunits gamma, delta, and epsilon) rotating inside the F1 region and a stationary peripheral stalk (subunits F6, b, d, and OSCP). Interacts with DNAJC30; interaction is direct.

It is found in the mitochondrion inner membrane. It catalyses the reaction H(+)(in) = H(+)(out). Subunit a, of the mitochondrial membrane ATP synthase complex (F(1)F(0) ATP synthase or Complex V) that produces ATP from ADP in the presence of a proton gradient across the membrane which is generated by electron transport complexes of the respiratory chain. ATP synthase complex consist of a soluble F(1) head domain - the catalytic core - and a membrane F(1) domain - the membrane proton channel. These two domains are linked by a central stalk rotating inside the F(1) region and a stationary peripheral stalk. During catalysis, ATP synthesis in the catalytic domain of F(1) is coupled via a rotary mechanism of the central stalk subunits to proton translocation. With the subunit c (ATP5MC1), forms the proton-conducting channel in the F(0) domain, that contains two crucial half-channels (inlet and outlet) that facilitate proton movement from the mitochondrial intermembrane space (IMS) into the matrix. Protons are taken up via the inlet half-channel and released through the outlet half-channel, following a Grotthuss mechanism. This chain is ATP synthase F(0) complex subunit a, found in Tropidurus hispidus (Peters' lava lizard).